We begin with the raw amino-acid sequence, 126 residues long: UPF0102 protein HD_0802 (126 aa).

The protein belongs to the UPF0102 family.

The chain is UPF0102 protein HD_0802 from Haemophilus ducreyi (strain 35000HP / ATCC 700724).